Reading from the N-terminus, the 344-residue chain is Hyoscyamine 6-dioxygenase (344 aa).

The Fe2OG dioxygenase domain occupies 193 to 293 (QIQMMLTNYY…RVSIATLIGP (101 aa)). Fe cation contacts are provided by H217, D219, and H274. A 2-oxoglutarate-binding site is contributed by R284.

It belongs to the iron/ascorbate-dependent oxidoreductase family. As to quaternary structure, monomer. It depends on Fe(2+) as a cofactor. Requires L-ascorbate as cofactor. In terms of processing, the N-terminus is blocked. In terms of tissue distribution, root.

The enzyme catalyses L-hyoscyamine + 2-oxoglutarate + O2 = (6S)-6-hydroxyhyoscyamine + succinate + CO2. Its pathway is alkaloid biosynthesis; scopolamine biosynthesis. This is Hyoscyamine 6-dioxygenase (H6H) from Hyoscyamus niger (Black henbane).